The chain runs to 249 residues: tRNA pseudouridine synthase A (249 aa).

The active-site Nucleophile is the D53. Residue Y111 participates in substrate binding.

Belongs to the tRNA pseudouridine synthase TruA family. As to quaternary structure, homodimer.

It carries out the reaction uridine(38/39/40) in tRNA = pseudouridine(38/39/40) in tRNA. Formation of pseudouridine at positions 38, 39 and 40 in the anticodon stem and loop of transfer RNAs. This chain is tRNA pseudouridine synthase A, found in Streptococcus pneumoniae (strain P1031).